A 284-amino-acid chain; its full sequence is Acetylglutamate kinase (284 aa).

Substrate is bound by residues 64 to 65 (GG), R86, and N179.

Belongs to the acetylglutamate kinase family. ArgB subfamily.

The protein localises to the cytoplasm. It catalyses the reaction N-acetyl-L-glutamate + ATP = N-acetyl-L-glutamyl 5-phosphate + ADP. It participates in amino-acid biosynthesis; L-arginine biosynthesis; N(2)-acetyl-L-ornithine from L-glutamate: step 2/4. Functionally, catalyzes the ATP-dependent phosphorylation of N-acetyl-L-glutamate. This Prochlorococcus marinus subsp. pastoris (strain CCMP1986 / NIES-2087 / MED4) protein is Acetylglutamate kinase.